Reading from the N-terminus, the 73-residue chain is UPF0352 protein APJL_0577 (73 aa).

It belongs to the UPF0352 family.

This chain is UPF0352 protein APJL_0577, found in Actinobacillus pleuropneumoniae serotype 3 (strain JL03).